We begin with the raw amino-acid sequence, 249 residues long: MIKHLAEALRFLTILPIPGKPALSEQALVRSMVAFPLAGTLIGGLVAATWFGATWLWGTTTGSLCAILTWGAITSGLHLDGIADSADALFSWRSRERKLEIMKDSRIGTMGAIALISILLLKWLFVLGCGDLAWRALIVAPTLGRWVDIIGIFWFPPAAEGGLGRTFHDHTRRSDFWWATSCAGLVAAGLLWWWAGLIFAVVIVATIIIARWMVRSLGGLTGDTYGALCEIAEMLVLAVVAALVNHQVL.

The next 6 membrane-spanning stretches (helical) occupy residues 32–52 (MVAFPLAGTLIGGLVAATWFG), 53–73 (ATWLWGTTTGSLCAILTWGAI), 107–127 (IGTMGAIALISILLLKWLFVL), 136–156 (ALIVAPTLGRWVDIIGIFWFP), 190–210 (LLWWWAGLIFAVVIVATIIIA), and 224–244 (TYGALCEIAEMLVLAVVAALV).

Belongs to the CobS family. Mg(2+) serves as cofactor.

The protein resides in the cell membrane. It carries out the reaction alpha-ribazole + adenosylcob(III)inamide-GDP = adenosylcob(III)alamin + GMP + H(+). The catalysed reaction is alpha-ribazole 5'-phosphate + adenosylcob(III)inamide-GDP = adenosylcob(III)alamin 5'-phosphate + GMP + H(+). It functions in the pathway cofactor biosynthesis; adenosylcobalamin biosynthesis; adenosylcobalamin from cob(II)yrinate a,c-diamide: step 7/7. Functionally, joins adenosylcobinamide-GDP and alpha-ribazole to generate adenosylcobalamin (Ado-cobalamin). Also synthesizes adenosylcobalamin 5'-phosphate from adenosylcobinamide-GDP and alpha-ribazole 5'-phosphate. This chain is Adenosylcobinamide-GDP ribazoletransferase, found in Herpetosiphon aurantiacus (strain ATCC 23779 / DSM 785 / 114-95).